The following is an 88-amino-acid chain: UPF0335 protein M446_5200 (88 aa).

This sequence belongs to the UPF0335 family.

The chain is UPF0335 protein M446_5200 from Methylobacterium sp. (strain 4-46).